The chain runs to 58 residues: Rho-conotoxin TIA (58 aa).

Residues 1–16 (MFTVFLLVVLATTGVS) form the signal peptide. Residues 17–38 (FTLDRASDGGNAVAKKSDVTAR) constitute a propeptide that is removed on maturation. An interaction with ADRA1B region spans residues 40–42 (NWR). Disulfide bonds link C43–C49 and C44–C57. The lacks the Ser-Xaa-Pro motif that is crucial for potent interaction with nAChR stretch occupies residues 45–47 (LIP). C57 carries the post-translational modification Cysteine amide.

It belongs to the conotoxin A superfamily. Expressed by the venom duct.

The protein localises to the secreted. In terms of biological role, allosteric inhibitor of alpha-1B adrenergic receptors (ADRA1B). Binds to an allosteric modulatory site on transmembrane helix 6 and 7 at the base of extracellular loop 3 of ADRA1B. Also weakly inhibits alpha-1A (ADRA1A) and alpha-1D (ADRA1D) adrenergic receptors in a competitive manner. Potently inhibits contractions of vas deferens, spleen and aorta in response to noradrenaline. May also inhibits nicotinic acetylcholine receptors with a possible distinct nAChR binding mode from other alpha-conotoxins, due to a different three residue motif (lacks the Ser-Xaa-Pro motif). The protein is Rho-conotoxin TIA of Conus tulipa (Fish-hunting cone snail).